Consider the following 255-residue polypeptide: Indole-3-glycerol phosphate synthase (255 aa).

This sequence belongs to the TrpC family.

It catalyses the reaction 1-(2-carboxyphenylamino)-1-deoxy-D-ribulose 5-phosphate + H(+) = (1S,2R)-1-C-(indol-3-yl)glycerol 3-phosphate + CO2 + H2O. It functions in the pathway amino-acid biosynthesis; L-tryptophan biosynthesis; L-tryptophan from chorismate: step 4/5. The polypeptide is Indole-3-glycerol phosphate synthase (Streptococcus thermophilus (strain ATCC BAA-491 / LMD-9)).